The following is a 283-amino-acid chain: Cyclin-C (283 aa).

In terms of domain architecture, Cyclin N-terminal spans 46–144 (NVIQALGEHL…VLECEFYLLE (99 aa)). A disordered region spans residues 252–283 (TILSKMPKPKPPPNSEGEQGPNGSQNSSYSQS). The segment covering 272-283 (PNGSQNSSYSQS) has biased composition (polar residues). Position 275 is a phosphoserine (serine 275).

The protein belongs to the cyclin family. Cyclin C subfamily. Component of the Mediator complex, which is composed of MED1, MED4, MED6, MED7, MED8, MED9, MED10, MED11, MED12, MED13, MED13L, MED14, MED15, MED16, MED17, MED18, MED19, MED20, MED21, MED22, MED23, MED24, MED25, MED26, MED27, MED29, MED30, MED31, CCNC, CDK8 and CDC2L6/CDK11. The MED12, MED13, CCNC and CDK8 subunits form a distinct module termed the CDK8 module. Mediator containing the CDK8 module is less active than Mediator lacking this module in supporting transcriptional activation. Individual preparations of the Mediator complex lacking one or more distinct subunits have been variously termed ARC, CRSP, DRIP, PC2, SMCC and TRAP. The cylin/CDK pair formed by CCNC/CDK8 also associates with the large subunit of RNA polymerase II.

It is found in the nucleus. Its function is as follows. Component of the Mediator complex, a coactivator involved in regulated gene transcription of nearly all RNA polymerase II-dependent genes. Mediator functions as a bridge to convey information from gene-specific regulatory proteins to the basal RNA polymerase II transcription machinery. Mediator is recruited to promoters by direct interactions with regulatory proteins and serves as a scaffold for the assembly of a functional preinitiation complex with RNA polymerase II and the general transcription factors. Binds to and activates cyclin-dependent kinase CDK8 that phosphorylates the CTD (C-terminal domain) of the large subunit of RNA polymerase II (RNAp II), which may inhibit the formation of a transcription initiation complex. The polypeptide is Cyclin-C (CCNC) (Bos taurus (Bovine)).